The sequence spans 749 residues: Homeobox-leucine zipper protein ROC7 (749 aa).

Positions 26 to 98 (LDQHQQHQHQ…KKRYHRHTQH (73 aa)) are disordered. Residues 46-57 (SDGRAPRDELEM) are compositionally biased toward basic and acidic residues. Residues 68-78 (SGGGGGGGGSG) are compositionally biased toward gly residues. Basic residues predominate over residues 86–97 (RPRKKRYHRHTQ). The homeobox DNA-binding region spans 88–147 (RKKRYHRHTQHQIQELEAFFKECPHPDDKQRKELSRELGLEPLQVKFWFQNKRTQMKTQH). The stretch at 137–218 (QNKRTQMKTQ…DRISAIAAKY (82 aa)) forms a coiled coil. The 239-residue stretch at 256–494 (ADFDKPLVIE…LERQCERLAS (239 aa)) folds into the START domain.

It belongs to the HD-ZIP homeobox family. Class IV subfamily.

It is found in the nucleus. Probable transcription factor. In Oryza sativa subsp. indica (Rice), this protein is Homeobox-leucine zipper protein ROC7 (ROC7).